The chain runs to 221 residues: UPF0502 protein XOO0224 (221 aa).

This sequence belongs to the UPF0502 family.

This chain is UPF0502 protein XOO0224, found in Xanthomonas oryzae pv. oryzae (strain MAFF 311018).